A 254-amino-acid chain; its full sequence is MASLLKVDQEVKLKVDSFRERITSEAEDLVANFFPKKLLELDSFLKEPILNIHDLTQIHSDMNLPVPDPILLTNSHDGLDGPTYKKRRLDECEEAFQGTKVFVMPNGMLKSNQQLVDIIEKVKPEIRLLIEKCNTVKMWVQLLIPRIEDGNNFGVSIQEETVAELRTVESEAASYLDQISRYYITRAKLVSKIAKYPHVEDYRRTVTEIDEKEYISLRLIISELRNQYVTLHDMILKNIEKIKRPRSSNAETLY.

N-acetylalanine is present on alanine 2. A phosphoserine mark is found at serine 17 and serine 24. Position 195 is an N6-acetyllysine; by P300/CBP (lysine 195). Serine 247 is modified (phosphoserine; by CHEK2).

The protein belongs to the PA28 family. In terms of assembly, homoheptamer; the stability of the heptamer is essential for the specific activation of the trypsine-like subunit and inhibition of the chymotrypsin-like and postglutamyl-preferring (PGPH) subunits of the proteasome. Interacts with p53/TP53 and MDM2. Interacts with MAP3K3. Associates with the proteasome. Interacts with CCAR2. Interacts with PSME3IP1 (via C-terminus); the interaction is direct and promotes the association of PSME3 with the 20S proteasome. Interacts with COIL; the interaction is inhibited by PSME3IP1. As to quaternary structure, (Microbial infection) Interacts with human cytomegalovirus UL27. In terms of processing, phosphorylated by MAP3K3. Phosphorylation at Ser-247 promotes its association with CCAR2. Acetylation at the major site Lys-195 is important for oligomerization and ability to degrade its target substrates. Deacetylated by SIRT1.

The protein resides in the nucleus. The protein localises to the cytoplasm. Subunit of the 11S REG-gamma (also called PA28-gamma) proteasome regulator, a doughnut-shaped homoheptamer which associates with the proteasome. 11S REG-gamma activates the trypsin-like catalytic subunit of the proteasome but inhibits the chymotrypsin-like and postglutamyl-preferring (PGPH) subunits. Facilitates the MDM2-p53/TP53 interaction which promotes ubiquitination- and MDM2-dependent proteasomal degradation of p53/TP53, limiting its accumulation and resulting in inhibited apoptosis after DNA damage. May also be involved in cell cycle regulation. Mediates CCAR2 and CHEK2-dependent SIRT1 inhibition. This is Proteasome activator complex subunit 3 (PSME3) from Homo sapiens (Human).